Here is a 282-residue protein sequence, read N- to C-terminus: Bis(5'-nucleosyl)-tetraphosphatase, symmetrical (282 aa).

The protein belongs to the Ap4A hydrolase family.

The catalysed reaction is P(1),P(4)-bis(5'-adenosyl) tetraphosphate + H2O = 2 ADP + 2 H(+). In terms of biological role, hydrolyzes diadenosine 5',5'''-P1,P4-tetraphosphate to yield ADP. The sequence is that of Bis(5'-nucleosyl)-tetraphosphatase, symmetrical from Burkholderia thailandensis (strain ATCC 700388 / DSM 13276 / CCUG 48851 / CIP 106301 / E264).